Reading from the N-terminus, the 358-residue chain is Serine/threonine-protein phosphatase 2A activator 2 (358 aa).

Belongs to the PTPA-type PPIase family.

It is found in the cytoplasm. It carries out the reaction [protein]-peptidylproline (omega=180) = [protein]-peptidylproline (omega=0). Its function is as follows. PPIases accelerate the folding of proteins. It catalyzes the cis-trans isomerization of proline imidic peptide bonds in oligopeptides. Acts as a regulatory subunit for PP2A-like phosphatases modulating their activity or substrate specificity, probably by inducing a conformational change in the catalytic subunit, a direct target of the PPIase. Can reactivate inactive phosphatase PP2A-phosphatase methylesterase complexes (PP2Ai) in presence of ATP and Mg(2+) by dissociating the inactive form from the complex. This chain is Serine/threonine-protein phosphatase 2A activator 2 (RRD2), found in Candida glabrata (strain ATCC 2001 / BCRC 20586 / JCM 3761 / NBRC 0622 / NRRL Y-65 / CBS 138) (Yeast).